The sequence spans 841 residues: Toll-like receptor 4 (841 aa).

A signal peptide spans 1-23; that stretch reads MMARARLAAALIPATAILSCLRT. At 24–632 the chain is on the extracellular side; sequence ESWDPCVQVV…FRNATCQLSK (609 aa). Cysteines 29 and 40 form a disulfide. Residues asparagine 35 and asparagine 73 are each glycosylated (N-linked (GlcNAc...) asparagine). LRR repeat units lie at residues 55 to 76, 79 to 100, 103 to 124, 127 to 148, 151 to 172, 176 to 197, and 205 to 225; these read STKMLDLSFNYLRHLGSHNFSS, ELQVLDLSRCEIKIIEDDTFQG, HLSTLILTGNPIQSLAWGAFSG, SLQKLVAVETNLVSLNDFPIGH, NLKELNVAHNFIHSFKLPEYFS, NLEHLDLSNNKIQNIYYEDVKV, and NLSLDLSLNPLDFIEPGTFKE. N-linked (GlcNAc...) asparagine glycans are attached at residues asparagine 205, asparagine 238, asparagine 282, and asparagine 309. The cysteines at positions 281 and 306 are disulfide-linked. LRR repeat units follow at residues 352-373, 374-394, 400-422, 423-444, 448-469, 472-495, 497-518, 521-542, and 545-568; these read SLKKFVFTDNKDISTFTEFQLP, SLQYLDLKRNHLSFKGCCSHT, NLKHLDLSFNDVITLGSNFMGLE, QLEHLDFQHSTLKQINAFSAFL, NLRYLDISYTNIRIVFHGIFTG, SLQTLKMAGNSFQNNLLPDIFTEL, NLTVLDLSKCQLEQVAQTAFHS, SLQVLNMSHNKLLSLDTFLYEP, and SLRILDCSFNRIMASKEQELQNLP. A disulfide bridge links cysteine 390 with cysteine 391. N-linked (GlcNAc...) asparagine glycosylation is found at asparagine 497 and asparagine 526. The N-linked (GlcNAc...) asparagine glycan is linked to asparagine 575. The LRRCT domain occupies 579–630; it reads NAFACVCEHQSFLQWVKDQRQLLVGAEQMMCAEPLDMEDMPVLSFRNATCQL. Disulfide bonds link cysteine 583/cysteine 609 and cysteine 585/cysteine 628. An N-linked (GlcNAc...) asparagine glycan is attached at asparagine 625. The chain crosses the membrane as a helical span at residues 633-653; it reads TIISVSVVTVLLVSVVGVLVY. Topologically, residues 654-841 are cytoplasmic; that stretch reads KFYFHLMLLA…TNPQEATTST (188 aa). A TIR domain is found at 673-816; that stretch reads SIYDAFVIYS…VFWRRLRKAL (144 aa). Residues 820 to 841 form a disordered region; sequence KPQSPEGTADAETNPQEATTST. Positions 830 to 841 are enriched in polar residues; sequence AETNPQEATTST.

It belongs to the Toll-like receptor family. In terms of assembly, belongs to the lipopolysaccharide (LPS) receptor, a multi-protein complex containing at least CD14, LY96 and TLR4. Binding to bacterial LPS leads to homodimerization. Interacts with LY96 via the extracellular domain. Interacts with MYD88 and TIRAP via their respective TIR domains. Interacts with TICAM2. Interacts with NOX4. Interacts with CNPY3 and HSP90B1; this interaction is required for proper folding in the endoplasmic reticulum. Interacts with MAP3K21; this interaction leads to negative regulation of TLR4 signaling. Interacts with CD36, following CD36 stimulation by oxLDL or amyloid-beta 42, and forms a heterodimer with TLR6. The trimeric complex is internalized and triggers inflammatory response. LYN kinase activity facilitates TLR4-TLR6 heterodimerization and signal initiation. Interacts with TICAM1 in response to LPS in a WDFY1-dependent manner. Interacts with WDFY1 in response to LPS. Interacts with SMPDL3B. Interacts with CEACAM1; upon lipopolysaccharide stimulation, forms a complex including TLR4 and the phosphorylated form of SYK and CEACAM1, which in turn, recruits PTPN6 that dephosphorylates SYK, reducing the production of reactive oxygen species (ROS) and lysosome disruption, which in turn, reduces the activity of the inflammasome. Interacts with RFTN1; the interaction occurs in response to lipopolysaccharide stimulation. Interacts with SCIMP; the interaction occurs in response to lipopolysaccharide stimulation and is enhanced by phosphorylation of SCIMP by LYN. This interaction facilitates the phosphorylation of TLR4 by LYN which elicits a selective cytokine response in macrophages. Interacts with TRAF3IP3. Interacts with TREM1; this interaction enhances TLR4-mediated inflammatory response. Interacts with ZG16B/PAUF. Interacts with CD82; this interaction inhibits TLR4-mediated signaling pathway. Post-translationally, phosphorylated on tyrosine residues by LYN after binding lipopolysaccharide. Ubiquitinated by RNF128 via 'Lys-28'-linked polyubiquitin chains, leading to proteasomal degradation.

The protein localises to the cell membrane. The protein resides in the early endosome. Its subcellular location is the cell projection. It is found in the ruffle. In terms of biological role, transmembrane receptor that functions as a pattern recognition receptor recognizing pathogen- and damage-associated molecular patterns (PAMPs and DAMPs) to induce innate immune responses via downstream signaling pathways. At the plasma membrane, cooperates with LY96 to mediate the innate immune response to bacterial lipopolysaccharide (LPS). Also involved in LPS-independent inflammatory responses triggered by free fatty acids, such as palmitate, and Ni(2+). Mechanistically, acts via MYD88, TIRAP and TRAF6, leading to NF-kappa-B activation, cytokine secretion and the inflammatory response. Alternatively, CD14-mediated TLR4 internalization via endocytosis is associated with the initiation of a MYD88-independent signaling via the TICAM1-TBK1-IRF3 axis leading to type I interferon production. In addition to the secretion of proinflammatory cytokines, initiates the activation of NLRP3 inflammasome and formation of a positive feedback loop between autophagy and NF-kappa-B signaling cascade. In complex with TLR6, promotes inflammation in monocytes/macrophages by associating with TLR6 and the receptor CD86. Upon ligand binding, such as oxLDL or amyloid-beta 42, the TLR4:TLR6 complex is internalized and triggers inflammatory response, leading to NF-kappa-B-dependent production of CXCL1, CXCL2 and CCL9 cytokines, via MYD88 signaling pathway, and CCL5 cytokine, via TICAM1 signaling pathway. In myeloid dendritic cells, vesicular stomatitis virus glycoprotein G but not LPS promotes the activation of IRF7, leading to type I IFN production in a CD14-dependent manner. The polypeptide is Toll-like receptor 4 (TLR4) (Bos taurus (Bovine)).